Consider the following 159-residue polypeptide: Transcription elongation factor GreA (159 aa).

Residues 7-72 are a coiled coil; that stretch reads MTVRGAEKLR…IQEIESKLSN (66 aa).

It belongs to the GreA/GreB family.

In terms of biological role, necessary for efficient RNA polymerase transcription elongation past template-encoded arresting sites. The arresting sites in DNA have the property of trapping a certain fraction of elongating RNA polymerases that pass through, resulting in locked ternary complexes. Cleavage of the nascent transcript by cleavage factors such as GreA or GreB allows the resumption of elongation from the new 3'terminus. GreA releases sequences of 2 to 3 nucleotides. The polypeptide is Transcription elongation factor GreA (Buchnera aphidicola subsp. Schizaphis graminum (strain Sg)).